Reading from the N-terminus, the 82-residue chain is Small ribosomal subunit protein uS17 (82 aa).

This sequence belongs to the universal ribosomal protein uS17 family. As to quaternary structure, part of the 30S ribosomal subunit.

Its function is as follows. One of the primary rRNA binding proteins, it binds specifically to the 5'-end of 16S ribosomal RNA. The sequence is that of Small ribosomal subunit protein uS17 from Shewanella frigidimarina (strain NCIMB 400).